Reading from the N-terminus, the 452-residue chain is Neuromedin-K receptor (452 aa).

The Extracellular segment spans residues 1 to 71 (MASVPRGENW…TNQFVQPSWR (71 aa)). Residues Asn9, Asn23, Asn40, and Asn60 are each glycosylated (N-linked (GlcNAc...) asparagine). Residues 72-94 (IALWSLAYGLVVAVAVFGNLIVI) traverse the membrane as a helical segment. Topologically, residues 95–104 (WIILAHKRMR) are cytoplasmic. A helical transmembrane segment spans residues 105-126 (TVTNYFLVNLAFSDASVAAFNT). Over 127 to 146 (LINFIYGLHSEWYFGANYCR) the chain is Extracellular. Cys145 and Cys220 are oxidised to a cystine. Residues 147–168 (FQNFFPITAVFASIYSMTAIAV) traverse the membrane as a helical segment. The Cytoplasmic portion of the chain corresponds to 169–188 (DRYMAIIDPLKPRLSATATK). A helical transmembrane segment spans residues 189–209 (IVIGSIWILAFLLAFPQCLYS). Residues 210–232 (KIKVMPGRTLCYVQWPEGPKQHF) lie on the Extracellular side of the membrane. Residues 233–257 (TYHIIVIILVYCFPLLIMGVTYTIV) traverse the membrane as a helical segment. Residues 258–286 (GITLWGGEIPGDTCDKYHEQLKAKRKVVK) lie on the Cytoplasmic side of the membrane. The helical transmembrane segment at 287–308 (MMIIVVVTFAICWLPYHVYFIL) threads the bilayer. Residues 309 to 321 (TAIYQQLNRWKYI) are Extracellular-facing. A helical membrane pass occupies residues 322 to 346 (QQVYLASFWLAMSSTMYNPIIYCCL). The Cytoplasmic portion of the chain corresponds to 347–452 (NKRFRAGFKR…SPYTSVDEYS (106 aa)). A lipid anchor (S-palmitoyl cysteine) is attached at Cys361. Residues 400–452 (FDPNDGDPTKSSRKKRAVPRDPSANGCSHRGSKSASTTSSFISSPYTSVDEYS) are disordered. Residues 432–452 (KSASTTSSFISSPYTSVDEYS) are compositionally biased toward low complexity.

Belongs to the G-protein coupled receptor 1 family. The anchoring of this receptor to the plasma membrane is probably mediated by the palmitoylation of a cysteine residue.

The protein localises to the cell membrane. Functionally, this is a receptor for the tachykinin neuropeptide neuromedin-K (neurokinin B). It is associated with G proteins that activate a phosphatidylinositol-calcium second messenger system. The rank order of affinity of this receptor to tachykinins is: neuromedin-K &gt; substance K &gt; substance P. The polypeptide is Neuromedin-K receptor (Tacr3) (Rattus norvegicus (Rat)).